The following is a 1057-amino-acid chain: Exportin-1 (1057 aa).

Residues 36 to 102 form the Importin N-terminal domain; it reads AQMVLGKFQE…KNYIVSLIIR (67 aa). 11 HEAT repeats span residues 239-275, 281-321, 462-501, 506-544, 551-588, 596-633, 739-776, 781-818, 855-892, 902-925, and 926-965; these read AEPSKLVKLLLHKYFPEPLFRNSTLKCLTEIGNLNLG, AVFI…FIHT, NTQHIMLEKLQTLISGREFTFQRLNTLCWAIGSISGAQNK, RFLVTVIKDLLELCQNKKGKDNKAVIASDIMYIVGQYPR, KFLKTVVNKLFEFMHESHPGVQDMACDTFLKISKQCKR, EESQPFINELLNQLSTTIAHLEQSQIHTFYEAVGYMIA, KETLKLLETFIEKSSDKQVIYSNFLQPLLEAVLGDYRT, TRDPEVLSLMTAIITSLKQLVHPEVPKILEAVFETTLS, QQFKLLIDCVVWAFKHTERNISETGLHILKELIENVSK, KTYLVSLLNDILYILTDSFHKSGF, and ALECDILRMMFQVVENGVVKIPLFDPQQANFPSNSEYVKE.

This sequence belongs to the exportin family. As to quaternary structure, component of a nuclear export receptor complex.

It localises to the nucleus. The protein resides in the cytoplasm. It is found in the perinuclear region. In terms of biological role, mediates the nuclear export of cellular proteins (cargos) bearing a leucine-rich nuclear export signal (NES). The sequence is that of Exportin-1 (xpo1) from Dictyostelium discoideum (Social amoeba).